A 475-amino-acid chain; its full sequence is Beta-amyrin 6-beta-monooxygenase (475 aa).

A helical membrane pass occupies residues 6 to 22; it reads LYSLAFALVYISLYFIF. C423 serves as a coordination point for heme.

It belongs to the cytochrome P450 family. It depends on heme as a cofactor. Specifically expressed in roots.

It is found in the membrane. The enzyme catalyses beta-amyrin + reduced [NADPH--hemoprotein reductase] + O2 = daturadiol + oxidized [NADPH--hemoprotein reductase] + H2O + H(+). Functionally, catalyzes the C-6 beta-hydroxylation of beta-amyrin to form daturadiol. Catalyzes the C-6 beta-hydroxylation of alpha-amyrin to form 6-beta-hydroxy-alpha-amyrin. The chain is Beta-amyrin 6-beta-monooxygenase from Solanum lycopersicum (Tomato).